Consider the following 347-residue polypeptide: Ribosomal RNA large subunit methyltransferase M (347 aa).

S-adenosyl-L-methionine-binding positions include S184, 217 to 220 (APGG), D236, D256, and D272. K301 functions as the Proton acceptor in the catalytic mechanism.

It belongs to the class I-like SAM-binding methyltransferase superfamily. RNA methyltransferase RlmE family. RlmM subfamily. As to quaternary structure, monomer.

The protein resides in the cytoplasm. The enzyme catalyses cytidine(2498) in 23S rRNA + S-adenosyl-L-methionine = 2'-O-methylcytidine(2498) in 23S rRNA + S-adenosyl-L-homocysteine + H(+). Functionally, catalyzes the 2'-O-methylation at nucleotide C2498 in 23S rRNA. The polypeptide is Ribosomal RNA large subunit methyltransferase M (Xanthomonas oryzae pv. oryzae (strain KACC10331 / KXO85)).